The chain runs to 212 residues: HTH-type transcriptional repressor KstR (212 aa).

Residues 1–11 (MTTSSRSRSST) show a composition bias toward low complexity. Positions 1-28 (MTTSSRSRSSTVAAATLGEDDLSSNAQK) are disordered. The HTH tetR-type domain maps to 28 to 88 (KERRKRILDA…SALAREFERI (61 aa)). The H-T-H motif DNA-binding region spans 51–70 (QMRAVAERADVAVGTLYRYF).

As to quaternary structure, homodimer.

Its function is as follows. Controls the expression of genes used for utilizing diverse lipids as energy sources. The sequence is that of HTH-type transcriptional repressor KstR (kstR) from Rhodococcus jostii (strain RHA1).